A 95-amino-acid polypeptide reads, in one-letter code: F(1)-ATPase inhibitor IF(1), mitochondrial (95 aa).

A mitochondrion-targeting transit peptide spans 1-25 (MLRTTVSKLARPTVSRAFATTSRAL). Disordered stretches follow at residues 20-48 (TTSR…REKA) and 76-95 (LKTL…GERN).

The protein belongs to the ATPase inhibitor family. As to quaternary structure, associates with the mitochondrial small ribosomal subunit (mt-SSU). IF(1) coiled-coil forms a helical bundle with the C-terminal extension of uS17m and also binds to mS27 in the mtSSU tail. Since the C-terminal extension of uS17m stabilizing the IF(1) on the mt-SSU is specific to N.crassa, IF(1) binding might also be specific.

The protein resides in the mitochondrion. In terms of biological role, endogenous F(1)F(0)-ATPase inhibitor limiting ATP depletion when the mitochondrial membrane potential falls below a threshold and the F(1)F(0)-ATP synthase starts hydrolyzing ATP to pump protons out of the mitochondrial matrix. Required to avoid the consumption of cellular ATP when the F(1)F(0)-ATP synthase enzyme acts as an ATP hydrolase. Functions through inserting its N-terminal part into the catalytically active F1-ATPase, thereby blocking its rotational movement and subsequently the ATP hydrolase activity. The polypeptide is F(1)-ATPase inhibitor IF(1), mitochondrial (inh1) (Neurospora crassa (strain ATCC 24698 / 74-OR23-1A / CBS 708.71 / DSM 1257 / FGSC 987)).